The primary structure comprises 317 residues: Insulin-like growth factor-binding protein 2 (317 aa).

Residues 1–33 form the signal peptide; that stretch reads MQPRLGGPALLLLPPLLLLLLLGAGGGDCGARA. The IGFBP N-terminal domain maps to 35–126; sequence VLFRCPPCTP…VHGEGTCEKH (92 aa). Intrachain disulfides connect Cys-39–Cys-76, Cys-42–Cys-78, Cys-50–Cys-79, Cys-68–Cys-82, Cys-90–Cys-103, and Cys-97–Cys-123. Disordered regions lie at residues 126–146 and 190–218; these read HGDAEYSASPEQVADNGEEHS and QHRQMGKGGKHHLGLEEPKKLRPPPARTP. One can recognise a Thyroglobulin type-1 domain in the interval 216–298; that stretch reads RTPCQQELDQ…APTIRGDPEC (83 aa). Disulfide bonds link Cys-219–Cys-253, Cys-264–Cys-275, and Cys-277–Cys-298. The short motif at 293 to 295 is the Cell attachment site element; sequence RGD.

As to quaternary structure, interacts with IGF1. Interacts with IGF2. Interacts (via RGD motif) with integrin alpha5/ITGA5; this interaction induces cell migration, adhesion or apoptosis according to the context. Interacts with PTPRB; this interaction leads to PTPRB dimerization and inactivation. Post-translationally, cleaved by MMP9 leading to release of free IGF2 from IGFBP2-IGF2 complex, which contributes to enhance the motility and the growth of astrocytes. In terms of processing, O-glycosylated.

It is found in the secreted. Multifunctional protein that plays a critical role in regulating the availability of IGFs such as IGF1 and IGF2 to their receptors and thereby regulates IGF-mediated cellular processes including proliferation, differentiation, and apoptosis in a cell-type specific manner. Functions coordinately with receptor protein tyrosine phosphatase beta/PTPRB and the IGF1 receptor to regulate IGF1-mediated signaling by stimulating the phosphorylation of PTEN leading to its inactivation and AKT1 activation. Plays a positive role in cell migration via interaction with integrin alpha5/ITGA5 through an RGD motif. Additionally, interaction with ITGA5/ITGB1 enhances the adhesion of endothelial progenitor cells to endothelial cells. Upon mitochondrial damage, facilitates apoptosis with ITGA5 of podocytes, and then activates the phosphorylation of focal adhesion kinase (FAK)-mediated mitochondrial injury. This chain is Insulin-like growth factor-binding protein 2 (IGFBP2), found in Bos taurus (Bovine).